Here is a 151-residue protein sequence, read N- to C-terminus: Neuroglobin (151 aa).

Residues 1–149 (MERPEHELIR…VVQAMSRGWN (149 aa)) form the Globin domain. Histidine 64 and histidine 96 together coordinate heme b.

This sequence belongs to the globin family. Monomer. Homodimer and homotetramer; disulfide-linked. Mainly monomeric but also detected as part of homodimers and homotetramers. Interacts with 14-3-3 proteins; regulates the phosphorylation of NGB. Could interact (ferrous form) with G-alpha(i) proteins (GTP-bound form). Post-translationally, phosphorylated during hypoxia by ERK1/ERK2. Phosphorylation regulates the heme pocket hexacoordination preventing the association of His-64 with the heme metal center. Thereby, promotes the access of dioxygen and nitrite to the heme and stimulates the nitrite reductase activity. Phosphorylation during hypoxia is stabilized by 14-3-3 proteins.

The protein resides in the cytoplasm. It localises to the cytosol. It is found in the mitochondrion matrix. It catalyses the reaction Fe(III)-heme b-[protein] + nitric oxide + H2O = Fe(II)-heme b-[protein] + nitrite + 2 H(+). Its function is as follows. Monomeric globin with a bis-histidyl six-coordinate heme-iron atom through which it can bind dioxygen, carbon monoxide and nitric oxide. Could help transport oxygen and increase its availability to the metabolically active neuronal tissues, though its low quantity in tissues as well as its high affinity for dioxygen, which may limit its oxygen-releasing ability, argue against it. The ferrous/deoxygenated form exhibits a nitrite reductase activity and it could produce nitric oxide which in turn inhibits cellular respiration in response to hypoxia. In its ferrous/deoxygenated state, it may also exhibit GDI (Guanine nucleotide Dissociation Inhibitor) activity toward heterotrimeric G-alpha proteins, thereby regulating signal transduction to facilitate neuroprotective responses in the wake of hypoxia and associated oxidative stress. The protein is Neuroglobin of Sus scrofa (Pig).